A 249-amino-acid chain; its full sequence is MQWGHCGVKSASCSWTPSLSSLLVWLILPFSLPYCLGSPSQDGYWSFFSEWFAPRFSVRALPFTLPNYRRSYEGLLPNCRPDVPQFAVKHPLGMFWHMRVSHLIDEMVSRRIYQTMEHSGQAAWKQVVGEATLTKLSGLDIVTHFQHLAAVEADSCRFLSSRLVMLKNLAVGNVSLQYNTTLDRVELIFPTPGTRPKLTDFRQWLISVHASIFSSVASSVTLFIVLWLRIPALRYVFGFHWPTATHHSS.

The first 35 residues, 1-35 (MQWGHCGVKSASCSWTPSLSSLLVWLILPFSLPYC), serve as a signal peptide directing secretion. Residues 36-207 (LGSPSQDGYW…LTDFRQWLIS (172 aa)) lie on the Virion surface side of the membrane. 2 N-linked (GlcNAc...) asparagine; by host glycosylation sites follow: Asn-173 and Asn-179. The chain crosses the membrane as a helical span at residues 208–228 (VHASIFSSVASSVTLFIVLWL). Residues 229-249 (RIPALRYVFGFHWPTATHHSS) lie on the Intravirion side of the membrane.

Heterotrimer of GP2a, GP3, and GP4. The GP2a-GP3-GP4 complex associates with the E protein. Interacts with host CD163; this interaction plays a role in virus entry into host cell.

It localises to the virion membrane. The protein localises to the host endoplasmic reticulum membrane. Its subcellular location is the host Golgi apparatus membrane. It is found in the secreted. In terms of biological role, minor envelope protein. Along with GP4, serves as the viral attachment protein responsible for mediating interactions with CD163 thereby playing a role in virus entry into susceptible host cells. This chain is Glycoprotein 2a (GP2a), found in Porcine reproductive and respiratory syndrome virus (strain Lelystad) (PRRSV).